Reading from the N-terminus, the 122-residue chain is Large ribosomal subunit protein uL14 (122 aa).

Belongs to the universal ribosomal protein uL14 family. In terms of assembly, part of the 50S ribosomal subunit. Forms a cluster with proteins L3 and L19. In the 70S ribosome, L14 and L19 interact and together make contacts with the 16S rRNA in bridges B5 and B8.

Binds to 23S rRNA. Forms part of two intersubunit bridges in the 70S ribosome. The chain is Large ribosomal subunit protein uL14 from Agrobacterium fabrum (strain C58 / ATCC 33970) (Agrobacterium tumefaciens (strain C58)).